A 332-amino-acid polypeptide reads, in one-letter code: Glycerol-3-phosphate dehydrogenase [NAD(P)+] (332 aa).

Residues S15, W16, and K110 each contribute to the NADPH site. Residues K110, G137, and S139 each contribute to the sn-glycerol 3-phosphate site. A141 serves as a coordination point for NADPH. K192, D245, S255, R256, and N257 together coordinate sn-glycerol 3-phosphate. K192 serves as the catalytic Proton acceptor. R256 contributes to the NADPH binding site. E282 serves as a coordination point for NADPH.

This sequence belongs to the NAD-dependent glycerol-3-phosphate dehydrogenase family.

Its subcellular location is the cytoplasm. The enzyme catalyses sn-glycerol 3-phosphate + NAD(+) = dihydroxyacetone phosphate + NADH + H(+). It carries out the reaction sn-glycerol 3-phosphate + NADP(+) = dihydroxyacetone phosphate + NADPH + H(+). It functions in the pathway membrane lipid metabolism; glycerophospholipid metabolism. Catalyzes the reduction of the glycolytic intermediate dihydroxyacetone phosphate (DHAP) to sn-glycerol 3-phosphate (G3P), the key precursor for phospholipid synthesis. This Coxiella burnetii (strain RSA 331 / Henzerling II) protein is Glycerol-3-phosphate dehydrogenase [NAD(P)+].